A 126-amino-acid chain; its full sequence is Protein ApaG (126 aa).

An ApaG domain is found at 2–126 (SDPRYQIDVS…FRLAVPGALH (125 aa)).

The protein is Protein ApaG of Pseudomonas putida (strain ATCC 700007 / DSM 6899 / JCM 31910 / BCRC 17059 / LMG 24140 / F1).